The primary structure comprises 60 residues: Toxin 5 (60 aa).

Cystine bridges form between cysteine 3–cysteine 22, cysteine 17–cysteine 39, cysteine 41–cysteine 52, and cysteine 53–cysteine 58.

This sequence belongs to the three-finger toxin family. Short-chain subfamily. Type I alpha-neurotoxin sub-subfamily. Expressed by the venom gland.

It localises to the secreted. Binds to muscle nicotinic acetylcholine receptor (nAChR) and inhibit acetylcholine from binding to the receptor, thereby impairing neuromuscular transmission. The sequence is that of Toxin 5 from Hydrophis schistosus (Beaked sea snake).